The sequence spans 388 residues: Probable peptidoglycan glycosyltransferase FtsW (388 aa).

The Cytoplasmic segment spans residues 1-19; that stretch reads MSAAAPKPRPAHRFHIDQT. The chain crosses the membrane as a helical span at residues 20 to 40; that stretch reads LLSVCLCLLGIGFVMVASSSM. Residues 41 to 57 lie on the Periplasmic side of the membrane; it reads HLGVKMADDVSYYPFKQ. Residues 58-78 form a helical membrane-spanning segment; sequence LVHIILGLMFAAAILAIPMKY. The Cytoplasmic portion of the chain corresponds to 79–85; it reads WQKIGQP. The chain crosses the membrane as a helical span at residues 86–106; sequence LFIVGLVLLLVVLIPGVGVKV. At 107–117 the chain is on the periplasmic side; the sequence is NGSTRWLSLLG. A helical transmembrane segment spans residues 118 to 137; it reads LRIQVSEVMKFISVVYMAGY. Over 138-147 the chain is Cytoplasmic; it reads ITRHSDHVRH. The chain crosses the membrane as a helical span at residues 148-168; it reads SIFGLLRPLMLLSVASILLLL. Over 169–170 the chain is Periplasmic; sequence EP. The chain crosses the membrane as a helical span at residues 171–191; it reads DFGSAVVILIIAMGMMFLGGA. R192 is a topological domain (cytoplasmic). The chain crosses the membrane as a helical span at residues 193 to 213; that stretch reads LSPFVALVALISSAGAILASS. The Periplasmic segment spans residues 214-271; the sequence is ADYRVKRMTSFLNPWEHARDSGYQLTQALISFGRGEVSGVGLGNGLQKLFYLPEAHTD. A helical membrane pass occupies residues 272–292; it reads FLFSVLGEELGLVGVTLVIAL. The Cytoplasmic portion of the chain corresponds to 293 to 315; sequence FTTLVVRGFSIGEQAEAAGERFS. Residues 316–336 traverse the membrane as a helical segment; that stretch reads ALVAYGLVIWFGFQAFVNMGV. At 337 to 348 the chain is on the periplasmic side; the sequence is NMGILPTKGLTL. The chain crosses the membrane as a helical span at residues 349-369; the sequence is PLMSYGGGSMIVMCGAMAVLF. The Cytoplasmic segment spans residues 370-388; sequence RIHYEVTELHKSNIKGKSR.

It belongs to the SEDS family. FtsW subfamily.

It is found in the cell inner membrane. The enzyme catalyses [GlcNAc-(1-&gt;4)-Mur2Ac(oyl-L-Ala-gamma-D-Glu-L-Lys-D-Ala-D-Ala)](n)-di-trans,octa-cis-undecaprenyl diphosphate + beta-D-GlcNAc-(1-&gt;4)-Mur2Ac(oyl-L-Ala-gamma-D-Glu-L-Lys-D-Ala-D-Ala)-di-trans,octa-cis-undecaprenyl diphosphate = [GlcNAc-(1-&gt;4)-Mur2Ac(oyl-L-Ala-gamma-D-Glu-L-Lys-D-Ala-D-Ala)](n+1)-di-trans,octa-cis-undecaprenyl diphosphate + di-trans,octa-cis-undecaprenyl diphosphate + H(+). It participates in cell wall biogenesis; peptidoglycan biosynthesis. Its function is as follows. Peptidoglycan polymerase that is essential for cell division. In Methylomonas methanica (strain DSM 25384 / MC09), this protein is Probable peptidoglycan glycosyltransferase FtsW.